The sequence spans 240 residues: Small ribosomal subunit protein uS2c (240 aa).

This sequence belongs to the universal ribosomal protein uS2 family.

The protein resides in the plastid. The protein localises to the chloroplast. The protein is Small ribosomal subunit protein uS2c (rps2) of Cycas taitungensis (Prince sago).